The sequence spans 622 residues: Protein translocase subunit SecD (622 aa).

Helical transmembrane passes span 6–26 (FKIGVTLALLLLCGYYLYPTV), 460–480 (AGLRSVLTGLLLVALFMIFYY), 485–505 (MIADLALVLNIIFILGILAAF), 512–532 (PGIAGIVLTIGMAVDANVLIF), 559–579 (AIFDANITTFFTAAILYSFGV), and 584–604 (GFAVTLMAGIAASLFSAIVIT).

This sequence belongs to the SecD/SecF family. SecD subfamily. As to quaternary structure, forms a complex with SecF. Part of the essential Sec protein translocation apparatus which comprises SecA, SecYEG and auxiliary proteins SecDF. Other proteins may also be involved.

It localises to the cell inner membrane. In terms of biological role, part of the Sec protein translocase complex. Interacts with the SecYEG preprotein conducting channel. SecDF uses the proton motive force (PMF) to complete protein translocation after the ATP-dependent function of SecA. This chain is Protein translocase subunit SecD, found in Rhodothermus marinus (strain ATCC 43812 / DSM 4252 / R-10) (Rhodothermus obamensis).